The primary structure comprises 336 residues: Putative ALA-interacting subunit 4 (336 aa).

The chain crosses the membrane as a helical span at residues 36–56; that stretch reads VILTFLVSGVVFIPLGVICLF. Asn-94 is a glycosylation site (N-linked (GlcNAc...) asparagine). A compositionally biased stretch (basic and acidic residues) spans 127–142; the sequence is RQDGQLRSPKDEHETK. Residues 127–148 are disordered; that stretch reads RQDGQLRSPKDEHETKSCAPED. N-linked (GlcNAc...) asparagine glycosylation is present at Asn-167. Residues 290–310 form a helical membrane-spanning segment; the sequence is FLGIAYLTVGSICLFLAVSFS. A glycan (N-linked (GlcNAc...) asparagine) is linked at Asn-329.

Belongs to the CDC50/LEM3 family. In terms of tissue distribution, expressed in flowers. May be restricted to pollen grains.

Its subcellular location is the membrane. This is Putative ALA-interacting subunit 4 (ALIS4) from Arabidopsis thaliana (Mouse-ear cress).